The following is a 326-amino-acid chain: Homocysteine S-methyltransferase 1 (326 aa).

A Hcy-binding domain is found at 9–323 (LLEDLIKKCG…STINAISRDL (315 aa)). Residues Cys241, Cys308, and Cys309 each contribute to the Zn(2+) site.

As to quaternary structure, monomer. The cofactor is Zn(2+). Expressed predominantly in roots. Expressed in rosette leaves, cauline leaves and developing seeds.

The catalysed reaction is S-methyl-L-methionine + L-homocysteine = 2 L-methionine + H(+). Its activity is regulated as follows. Strongly inhibited by methionine. In terms of biological role, catalyzes methyl transfer from S-methylmethionine (SMM) to adenosyl-L-homocysteine (AdoMet). SMM degradation (by HMT-1, HMT-2 and HMT-3) and biosynthesis (by MMT1) constitute the SMM cycle in plants, which is probably required to achieve short term control of AdoMet level. In Arabidopsis thaliana (Mouse-ear cress), this protein is Homocysteine S-methyltransferase 1 (HMT-1).